Consider the following 183-residue polypeptide: Adenine phosphoribosyltransferase (183 aa).

It belongs to the purine/pyrimidine phosphoribosyltransferase family. As to quaternary structure, homodimer.

It is found in the cytoplasm. The enzyme catalyses AMP + diphosphate = 5-phospho-alpha-D-ribose 1-diphosphate + adenine. It participates in purine metabolism; AMP biosynthesis via salvage pathway; AMP from adenine: step 1/1. In terms of biological role, catalyzes a salvage reaction resulting in the formation of AMP, that is energically less costly than de novo synthesis. The polypeptide is Adenine phosphoribosyltransferase (Shewanella sp. (strain ANA-3)).